We begin with the raw amino-acid sequence, 340 residues long: MEFDAVLLLSFGGPEGPDQVRPFLENVTRGRGVPPERLDAVAEHYMHFGGVSPINGINRALVTELRAEVGLPVYFGNRNWEPYVEDTVMAMRDNGVKRAAVFATSAWSGYSGCTQYVEDIARARRAAGPDAPELVKLRSYFDHPLFVEMFADAIAAAATTVPKDARLVFTAHSIPVAADRRCGPGLYSRQVAYAASLVAAAAGYDDYDLAWQSRSGPPQVPWLEPDVADHLETLRAGGVKAVIVCPIGFVADHIEVVWDLDSELRAQAQGAGIALARAATPNADRRFARLARGLIEELRSGGEPARVGGPDPVFGCLAGINGEPCRPPHCAARETAAQGA.

Fe-coproporphyrin III contacts are provided by serine 52 and tyrosine 116. Residues histidine 172 and glutamate 255 each contribute to the Fe(2+) site.

The protein belongs to the ferrochelatase family.

It localises to the cytoplasm. It carries out the reaction Fe-coproporphyrin III + 2 H(+) = coproporphyrin III + Fe(2+). The protein operates within porphyrin-containing compound metabolism; protoheme biosynthesis. In terms of biological role, involved in coproporphyrin-dependent heme b biosynthesis. Catalyzes the insertion of ferrous iron into coproporphyrin III to form Fe-coproporphyrin III. In Mycobacterium marinum (strain ATCC BAA-535 / M), this protein is Coproporphyrin III ferrochelatase.